We begin with the raw amino-acid sequence, 270 residues long: Interleukin-1 beta (270 aa).

The propeptide occupies 1 to 118 (MATVPEPTSE…VYDDDAFVCD (118 aa)).

Belongs to the IL-1 family. In terms of assembly, monomer. In its precursor form, weakly interacts with full-length MEFV; the mature cytokine does not interact at all. Interacts with integrins ITGAV:ITGBV and ITGA5:ITGB1; integrin-binding is required for IL1B signaling. Interacts with cargo receptor TMED10; the interaction is direct and is required for the secretion of IL1B mature form. Interacts with HSP90AB1; the interaction facilitates cargo translocation into the ERGIC. Interacts with HSP90B1; the interaction facilitates cargo translocation into the ERGIC.

The protein resides in the cytoplasm. It is found in the cytosol. The protein localises to the secreted. It localises to the lysosome. Its subcellular location is the extracellular exosome. Functionally, potent pro-inflammatory cytokine. Initially discovered as the major endogenous pyrogen, induces prostaglandin synthesis, neutrophil influx and activation, T-cell activation and cytokine production, B-cell activation and antibody production, and fibroblast proliferation and collagen production. Promotes Th17 differentiation of T-cells. Synergizes with IL12/interleukin-12 to induce IFNG synthesis from T-helper 1 (Th1) cells. Plays a role in angiogenesis by inducing VEGF production synergistically with TNF and IL6. Involved in transduction of inflammation downstream of pyroptosis: its mature form is specifically released in the extracellular milieu by passing through the gasdermin-D (GSDMD) pore. The chain is Interleukin-1 beta (IL1B) from Phoca vitulina richardii (Pacific harbor seal).